The following is a 292-amino-acid chain: Ribose import binding protein RbsB (292 aa).

The N-terminal stretch at 1 to 23 (MKKLTALTSAVLLGLAVSSSASA) is a signal peptide.

Belongs to the bacterial solute-binding protein 2 family. The complex is composed of an ATP-binding protein (RbsA), two transmembrane proteins (RbsC) and a solute-binding protein (RbsB).

It localises to the periplasm. Part of the ABC transporter complex RbsABC involved in ribose import. Binds ribose. This Haemophilus influenzae (strain ATCC 51907 / DSM 11121 / KW20 / Rd) protein is Ribose import binding protein RbsB (rbsB).